The primary structure comprises 90 residues: Small ribosomal subunit protein bS16 (90 aa).

Belongs to the bacterial ribosomal protein bS16 family.

This Streptococcus gordonii (strain Challis / ATCC 35105 / BCRC 15272 / CH1 / DL1 / V288) protein is Small ribosomal subunit protein bS16.